The sequence spans 250 residues: Vacuolar protein sorting-associated protein 22 homolog 1 (250 aa).

Residues 35 to 55 adopt a coiled-coil conformation; sequence MKEQLSTFRSQLEEFARKHKN.

The protein belongs to the SNF8 family. As to quaternary structure, component of the endosomal sorting complex required for transport II (ESCRT-II), composed of VPS22, VPS25 and VPS36.

It localises to the endosome. In terms of biological role, component of the endosomal sorting complex required for transport II (ESCRT-II), which is required for multivesicular body (MVB) formation and sorting of endosomal cargo proteins into MVBs. The ESCRT-II complex is probably involved in the recruitment of the ESCRT-III complex. The polypeptide is Vacuolar protein sorting-associated protein 22 homolog 1 (VP22-1) (Arabidopsis thaliana (Mouse-ear cress)).